A 91-amino-acid chain; its full sequence is MTAQVDRYVSFKGIDWVGRSREIFARLQSHIDQANSPFWPYFTRQRKLAHSQGLDDLRVLHNYLPTLRELLENMGDLKTLGMLEELEQICM.

Belongs to the CowN family.

Functionally, is required to sustain N(2)-dependent growth in the presence of low levels of carbon monoxide (CO). Probably acts by protecting the N(2) fixation ability of the nitrogenase complex, which is inactivated in the presence of CO. The protein is N(2)-fixation sustaining protein CowN of Beijerinckia indica subsp. indica (strain ATCC 9039 / DSM 1715 / NCIMB 8712).